We begin with the raw amino-acid sequence, 88 residues long: Small ribosomal subunit protein bS20 (88 aa).

It belongs to the bacterial ribosomal protein bS20 family.

In terms of biological role, binds directly to 16S ribosomal RNA. This Coprothermobacter proteolyticus (strain ATCC 35245 / DSM 5265 / OCM 4 / BT) protein is Small ribosomal subunit protein bS20.